The following is a 411-amino-acid chain: Serine/threonine transporter SstT (411 aa).

8 helical membrane-spanning segments follow: residues 17-37, 41-61, 79-99, 138-158, 189-209, 214-234, 295-315, and 327-347; these read IMVG…TASA, LGAL…LVLV, ILFL…VVSF, ALIS…GLAL, LGIF…ALWG, LVVL…LIVF, MAGA…TLGI, and VVAA…LLLI.

It belongs to the dicarboxylate/amino acid:cation symporter (DAACS) (TC 2.A.23) family.

It is found in the cell inner membrane. The catalysed reaction is L-serine(in) + Na(+)(in) = L-serine(out) + Na(+)(out). It catalyses the reaction L-threonine(in) + Na(+)(in) = L-threonine(out) + Na(+)(out). In terms of biological role, involved in the import of serine and threonine into the cell, with the concomitant import of sodium (symport system). This is Serine/threonine transporter SstT from Serratia proteamaculans (strain 568).